The sequence spans 154 residues: Transcriptional repressor NrdR (154 aa).

A zinc finger spans residues 3 to 34; the sequence is CPFCGAHDTKVIDSRLVAEGDQVRRRRECLAC. Positions 49-139 constitute an ATP-cone domain; it reads PRLIKQDGSR…VYRRFQDLNE (91 aa).

The protein belongs to the NrdR family. Zn(2+) is required as a cofactor.

Its function is as follows. Negatively regulates transcription of bacterial ribonucleotide reductase nrd genes and operons by binding to NrdR-boxes. This Pseudomonas aeruginosa (strain LESB58) protein is Transcriptional repressor NrdR.